Consider the following 363-residue polypeptide: Endopolygalacturonase 1 (363 aa).

The first 17 residues, 1–17 (MVSYLFVLGALASVAIA), serve as a signal peptide directing secretion. A propeptide spanning residues 18 to 26 (SPVPELKAR) is cleaved from the precursor. Cysteine 29 and cysteine 44 form a disulfide bridge. PbH1 repeat units lie at residues 188–209 (STGV…AVNS), 210–230 (GTNI…SIGS), 239–260 (VKSV…RIKT), and 268–290 (VSDI…VIEQ). Aspartate 202 acts as the Proton donor in catalysis. A disulfide bridge links cysteine 204 with cysteine 220. The N-linked (GlcNAc...) asparagine glycan is linked to asparagine 212. Histidine 224 is a catalytic residue. Disulfide bonds link cysteine 330–cysteine 333 and cysteine 352–cysteine 363.

This sequence belongs to the glycosyl hydrolase 28 family.

The protein localises to the secreted. The enzyme catalyses (1,4-alpha-D-galacturonosyl)n+m + H2O = (1,4-alpha-D-galacturonosyl)n + (1,4-alpha-D-galacturonosyl)m.. In terms of biological role, involved in maceration and soft-rotting of plant tissue. Hydrolyzes the 1,4-alpha glycosidic bonds of de-esterified pectate in the smooth region of the plant cell wall. The chain is Endopolygalacturonase 1 (PG1) from Colletotrichum lindemuthianum (Bean anthracnose fungus).